The following is an 860-amino-acid chain: DNA mismatch repair protein MutS (860 aa).

620–627 is an ATP binding site; it reads GPNMGGKS.

It belongs to the DNA mismatch repair MutS family.

Functionally, this protein is involved in the repair of mismatches in DNA. It is possible that it carries out the mismatch recognition step. This protein has a weak ATPase activity. This is DNA mismatch repair protein MutS from Dechloromonas aromatica (strain RCB).